A 497-amino-acid chain; its full sequence is RNA polymerase sigma factor SigA (497 aa).

Disordered stretches follow at residues 1–20 and 62–86; these read MSTDKKTLGEKPNSTKPELS and KTLHENKESDVPKKRRGRKPKHAPL. Over residues 63-73 the composition is skewed to basic and acidic residues; it reads TLHENKESDVP. Basic residues predominate over residues 74-84; sequence KKRRGRKPKHA. The interval 250 to 320 is sigma-70 factor domain-2; it reads LVTSNLRLVV…TRAIADQART (71 aa). Residues 274–277 carry the Interaction with polymerase core subunit RpoC motif; sequence DLIQ. Residues 329–410 form a sigma-70 factor domain-3 region; the sequence is ETINRLAKAE…DTDAQTPDEF (82 aa). The segment at 423-478 is sigma-70 factor domain-4; the sequence is LLNNNLSEQEELIVRMRIGMPPYNEPKTLDEVGQKILIPREKIRQIENKAIRKLRH. A DNA-binding region (H-T-H motif) is located at residues 451-470; the sequence is LDEVGQKILIPREKIRQIEN.

This sequence belongs to the sigma-70 factor family. RpoD/SigA subfamily. In terms of assembly, interacts transiently with the RNA polymerase catalytic core.

It localises to the cytoplasm. Sigma factors are initiation factors that promote the attachment of RNA polymerase to specific initiation sites and are then released. This sigma factor is the primary sigma factor during exponential growth. This Mycoplasma genitalium (strain ATCC 33530 / DSM 19775 / NCTC 10195 / G37) (Mycoplasmoides genitalium) protein is RNA polymerase sigma factor SigA.